A 546-amino-acid polypeptide reads, in one-letter code: uncharacterized protein (546 aa).

The next 5 helical transmembrane spans lie at 4–23 (ILLE…GYPL), 30–47 (GSSL…AMGS), 57–79 (IVYV…PAFV), 91–113 (ALII…LLGF), and 155–177 (PVVG…ISLV). 2 RCK C-terminal domains span residues 189–274 (GKRL…FLGE) and 275–359 (VSEE…FFGD). The next 6 helical transmembrane spans lie at 372 to 394 (FSLG…GGIT), 399 to 421 (FAGG…SMVW), 434 to 456 (IGLV…TTLA), 460 to 482 (GLAI…LWIG), 489 to 511 (PMSI…GYAL), and 521 to 543 (IGYA…ILLT).

It belongs to the AAE transporter (TC 2.A.81) family.

The protein resides in the cell membrane. This is an uncharacterized protein from Geobacter sulfurreducens (strain ATCC 51573 / DSM 12127 / PCA).